The sequence spans 215 residues: Thymidylate kinase (215 aa).

Residue 12–19 (GLEGAGKT) coordinates ATP.

The protein belongs to the thymidylate kinase family.

The catalysed reaction is dTMP + ATP = dTDP + ADP. In terms of biological role, phosphorylation of dTMP to form dTDP in both de novo and salvage pathways of dTTP synthesis. This is Thymidylate kinase from Halorhodospira halophila (strain DSM 244 / SL1) (Ectothiorhodospira halophila (strain DSM 244 / SL1)).